A 183-amino-acid polypeptide reads, in one-letter code: ATP synthase subunit b, chloroplastic (183 aa).

The helical transmembrane segment at 25-45 threads the bilayer; sequence DILATNLINLTVVVGVLIFFG.

It belongs to the ATPase B chain family. As to quaternary structure, F-type ATPases have 2 components, F(1) - the catalytic core - and F(0) - the membrane proton channel. F(1) has five subunits: alpha(3), beta(3), gamma(1), delta(1), epsilon(1). F(0) has four main subunits: a(1), b(1), b'(1) and c(10-14). The alpha and beta chains form an alternating ring which encloses part of the gamma chain. F(1) is attached to F(0) by a central stalk formed by the gamma and epsilon chains, while a peripheral stalk is formed by the delta, b and b' chains.

The protein resides in the plastid. Its subcellular location is the chloroplast thylakoid membrane. F(1)F(0) ATP synthase produces ATP from ADP in the presence of a proton or sodium gradient. F-type ATPases consist of two structural domains, F(1) containing the extramembraneous catalytic core and F(0) containing the membrane proton channel, linked together by a central stalk and a peripheral stalk. During catalysis, ATP synthesis in the catalytic domain of F(1) is coupled via a rotary mechanism of the central stalk subunits to proton translocation. In terms of biological role, component of the F(0) channel, it forms part of the peripheral stalk, linking F(1) to F(0). This chain is ATP synthase subunit b, chloroplastic, found in Saccharum hybrid (Sugarcane).